A 416-amino-acid polypeptide reads, in one-letter code: Serine hydroxymethyltransferase (416 aa).

(6S)-5,6,7,8-tetrahydrofolate contacts are provided by residues L119 and 123 to 125; that span reads GHL. Residue K228 is modified to N6-(pyridoxal phosphate)lysine.

This sequence belongs to the SHMT family. In terms of assembly, homodimer. It depends on pyridoxal 5'-phosphate as a cofactor.

Its subcellular location is the cytoplasm. The catalysed reaction is (6R)-5,10-methylene-5,6,7,8-tetrahydrofolate + glycine + H2O = (6S)-5,6,7,8-tetrahydrofolate + L-serine. Its pathway is one-carbon metabolism; tetrahydrofolate interconversion. It participates in amino-acid biosynthesis; glycine biosynthesis; glycine from L-serine: step 1/1. Functionally, catalyzes the reversible interconversion of serine and glycine with tetrahydrofolate (THF) serving as the one-carbon carrier. This reaction serves as the major source of one-carbon groups required for the biosynthesis of purines, thymidylate, methionine, and other important biomolecules. Also exhibits THF-independent aldolase activity toward beta-hydroxyamino acids, producing glycine and aldehydes, via a retro-aldol mechanism. The polypeptide is Serine hydroxymethyltransferase (Moorella thermoacetica (strain ATCC 39073 / JCM 9320)).